We begin with the raw amino-acid sequence, 918 residues long: DNA repair and recombination protein RAD54B (918 aa).

Over residues 1-11 the composition is skewed to polar residues; it reads MRRSAAPSQVL. Residues 1–29 form a disordered region; it reads MRRSAAPSQVLGNVAKKPRFIPPGKSNAL. The 168-residue stretch at 320–487 folds into the Helicase ATP-binding domain; the sequence is GMRVSGRFGA…YALIEFVNPG (168 aa). 333–340 is an ATP binding site; the sequence is DEMGLGKT. Residues 438–441 carry the DEGH box motif; sequence DEGH. A Helicase C-terminal domain is found at 653 to 817; sequence VLVKLLAAIR…HIHFSVEELR (165 aa). A disordered region spans residues 842–873; sequence KDHQNPSSKKPSVSRCCQLRQDQGKHNSKKPL.

It belongs to the SNF2/RAD54 helicase family.

The protein resides in the nucleus. Functionally, involved in DNA repair and mitotic recombination. This Gallus gallus (Chicken) protein is DNA repair and recombination protein RAD54B (RAD54B).